Reading from the N-terminus, the 855-residue chain is DNA mismatch repair protein MutS (855 aa).

Gly613–Ser620 provides a ligand contact to ATP.

This sequence belongs to the DNA mismatch repair MutS family.

In terms of biological role, this protein is involved in the repair of mismatches in DNA. It is possible that it carries out the mismatch recognition step. This protein has a weak ATPase activity. The polypeptide is DNA mismatch repair protein MutS (Azotobacter vinelandii (strain DJ / ATCC BAA-1303)).